Consider the following 187-residue polypeptide: ATP synthase subunit b, chloroplastic (187 aa).

Residues 29-49 (LAVVLGVLIYLGKGVCAGCIL) form a helical membrane-spanning segment.

The protein belongs to the ATPase B chain family. F-type ATPases have 2 components, F(1) - the catalytic core - and F(0) - the membrane proton channel. F(1) has five subunits: alpha(3), beta(3), gamma(1), delta(1), epsilon(1). F(0) has four main subunits: a(1), b(1), b'(1) and c(10-14). The alpha and beta chains form an alternating ring which encloses part of the gamma chain. F(1) is attached to F(0) by a central stalk formed by the gamma and epsilon chains, while a peripheral stalk is formed by the delta, b and b' chains.

Its subcellular location is the plastid. It localises to the chloroplast thylakoid membrane. F(1)F(0) ATP synthase produces ATP from ADP in the presence of a proton or sodium gradient. F-type ATPases consist of two structural domains, F(1) containing the extramembraneous catalytic core and F(0) containing the membrane proton channel, linked together by a central stalk and a peripheral stalk. During catalysis, ATP synthesis in the catalytic domain of F(1) is coupled via a rotary mechanism of the central stalk subunits to proton translocation. Its function is as follows. Component of the F(0) channel, it forms part of the peripheral stalk, linking F(1) to F(0). The chain is ATP synthase subunit b, chloroplastic from Angiopteris evecta (Mule's foot fern).